We begin with the raw amino-acid sequence, 62 residues long: uncharacterized protein (62 aa).

The next 2 membrane-spanning stretches (helical) occupy residues 7–27 (LLLL…VFIA) and 34–51 (IIAS…GFTL).

It is found in the cell membrane. This is an uncharacterized protein from Bacillus subtilis (strain 168).